Consider the following 859-residue polypeptide: Leucine--tRNA ligase (859 aa).

Residues 42–52 carry the 'HIGH' region motif; the sequence is PYPSGRLHMGH. The 'KMSKS' region signature appears at 618–622; it reads KMSKS. Residue Lys621 participates in ATP binding.

This sequence belongs to the class-I aminoacyl-tRNA synthetase family.

The protein localises to the cytoplasm. It catalyses the reaction tRNA(Leu) + L-leucine + ATP = L-leucyl-tRNA(Leu) + AMP + diphosphate. The sequence is that of Leucine--tRNA ligase from Shewanella woodyi (strain ATCC 51908 / MS32).